The sequence spans 860 residues: Transforming growth factor-beta receptor-associated protein 1 (860 aa).

The CNH domain occupies 24–297 (RVNIECVECC…HILQDFEGRV (274 aa)). Residues 564–728 (RPLDEQQKNS…LLAIYLHAGP (165 aa)) form a CHCR repeat.

This sequence belongs to the TRAP1 family. As to quaternary structure, interacts with TGFBR2 and ACVR2B; in the absence of ligand stimulation. Interacts with TGFBR1, ACVRL1, BMPR1A and ACVR1B; in the absence of ligand stimulation and to a less extent. Interacts with SMAD4; the interaction seems to be mutually exclusive with the interaction of SMAD4 and phosphorylated SMAD2. May interact with ALOX5. Interacts with RAB5C. Interacts with VPS8, VPS11 and VPS16. Component of the putative class C core vacuole/endosome tethering (CORVET) complex; the core of which composed of the class C Vps proteins VPS11, VPS16, VPS18 and VPS33A, is associated with VPS8 and TGFBRAP1.

The protein localises to the cytoplasm. Its subcellular location is the early endosome. Its function is as follows. Plays a role in the TGF-beta/activin signaling pathway. It associates with inactive heteromeric TGF-beta and activin receptor complexes, mainly through the type II receptor, and is released upon activation of signaling. May recruit SMAD4 to the vicinity of the receptor complex and facilitate its interaction with receptor-regulated Smads, such as SMAD2. Plays a role in vesicle-mediated protein trafficking of the endocytic membrane transport pathway. Believed to act as a component of the putative CORVET endosomal tethering complexes which is proposed to be involved in the Rab5-to-Rab7 endosome conversion probably implicating MON1A/B, and via binding SNAREs and SNARE complexes to mediate tethering and docking events during SNARE-mediated membrane fusion. The CORVET complex is proposed to function as a Rab5 effector to mediate early endosome fusion probably in specific endosome subpopulations. Functions predominantly in APPL1-containing endosomes and in degradative but not recycling trafficking of endocytosed cargo. In Homo sapiens (Human), this protein is Transforming growth factor-beta receptor-associated protein 1 (TGFBRAP1).